Consider the following 220-residue polypeptide: Fructose-6-phosphate aldolase (220 aa).

The active-site Schiff-base intermediate with substrate is Lys85.

This sequence belongs to the transaldolase family. Type 3A subfamily. Homodecamer.

The protein resides in the cytoplasm. It carries out the reaction beta-D-fructose 6-phosphate = dihydroxyacetone + D-glyceraldehyde 3-phosphate. Catalyzes the reversible formation of fructose 6-phosphate from dihydroxyacetone and D-glyceraldehyde 3-phosphate via an aldolization reaction. The protein is Fructose-6-phosphate aldolase of Salmonella choleraesuis (strain SC-B67).